A 349-amino-acid chain; its full sequence is Heat-inducible transcription repressor HrcA (349 aa).

It belongs to the HrcA family.

Its function is as follows. Negative regulator of class I heat shock genes (grpE-dnaK-dnaJ and groELS operons). Prevents heat-shock induction of these operons. The chain is Heat-inducible transcription repressor HrcA from Lactobacillus acidophilus (strain ATCC 700396 / NCK56 / N2 / NCFM).